Here is a 570-residue protein sequence, read N- to C-terminus: Acetolactate synthase (570 aa).

E60 is a thiamine diphosphate binding site. FAD is bound by residues Q162, 266–287 (FRNQ…IGYD), and 308–327 (DEII…LIGD). The segment at 399–479 (SHAIWMSRYF…IVHIVWNDST (81 aa)) is thiamine pyrophosphate binding. D450 is a Mg(2+) binding site.

Belongs to the TPP enzyme family. It depends on Mg(2+) as a cofactor. Requires thiamine diphosphate as cofactor.

The catalysed reaction is 2 pyruvate + H(+) = (2S)-2-acetolactate + CO2. It functions in the pathway polyol metabolism; (R,R)-butane-2,3-diol biosynthesis; (R,R)-butane-2,3-diol from pyruvate: step 1/3. The protein is Acetolactate synthase (alsS) of Bacillus subtilis (strain 168).